The sequence spans 410 residues: Sensor histidine kinase GlnK (410 aa).

The Extracellular portion of the chain corresponds to 1–15 (MLITVPLAGELKFYP). Residues 16 to 36 (LNEEFRVSFGAPVFFFFLSLL) form a helical membrane-spanning segment. The Cytoplasmic portion of the chain corresponds to 37–38 (RH). Residues 39 to 59 (VPAVLPGFLTGAAVFIFRVFL) traverse the membrane as a helical segment. Residues 60–71 (ELWGGGHNGLTP) lie on the Extracellular side of the membrane. Residues 72–92 (ILYDQASGFFFYMTYACLFSI) form a helical membrane-spanning segment. The Cytoplasmic portion of the chain corresponds to 93 to 102 (LKANRFRERP). Residues 103-123 (IMLGFIGFMIEVVSDCVELTV) form a helical membrane-spanning segment. Residues 124-139 (QFLIFHTVVTPEKITD) lie on the Extracellular side of the membrane. Residues 140-160 (IAVIAISHTFIVMSFYSVLKL) traverse the membrane as a helical segment. Topologically, residues 161 to 410 (YETQSREKQT…LPVRHLIQKG (250 aa)) are cytoplasmic. The Histidine kinase domain maps to 189–405 (VHLKKTLKTT…VFAIRLPVRH (217 aa)). The residue at position 190 (H190) is a Phosphohistidine; by autocatalysis.

Homotrimer. Under poor nitrogen source such as nitrate, the complex between GlnK and AmtB, which are the transmembrane ammonium transporter and its cognate regulator, respectively, interacts with TnrA. GlnK-ATP complex are not able to bind TnrA.

Its subcellular location is the cell membrane. It carries out the reaction ATP + protein L-histidine = ADP + protein N-phospho-L-histidine.. Functionally, member of the two-component regulatory system GlnK/GlnL that positively regulates the expression of the glsA-glnT operon in response to glutamine. It seems that autophosphorylated GlnK transfers a phosphoryl group to GlnL, which positively regulates the expression of the glsA-glnT operon. Interaction between GlnK-AmtB complex and TnrA protects TnrA from proteolytic degradation. This chain is Sensor histidine kinase GlnK, found in Bacillus subtilis (strain 168).